Here is a 65-residue protein sequence, read N- to C-terminus: Photosystem II reaction center protein J (65 aa).

Positions 1-17 (MSTKLKGPDGRIPDRLP) are enriched in basic and acidic residues. Residues 1 to 20 (MSTKLKGPDGRIPDRLPDGT) form a disordered region. A helical membrane pass occupies residues 36–56 (LWLVATVGGMAVLSVLGLFFF).

Belongs to the PsbJ family. In terms of assembly, PSII is composed of 1 copy each of membrane proteins PsbA, PsbB, PsbC, PsbD, PsbE, PsbF, PsbH, PsbI, PsbJ, PsbK, PsbL, PsbM, PsbT, PsbX, PsbY, Psb30/Ycf12, peripheral proteins PsbO, CyanoQ (PsbQ), PsbU, PsbV and a large number of cofactors. It forms dimeric complexes.

The protein localises to the cellular thylakoid membrane. Functionally, one of the components of the core complex of photosystem II (PSII). PSII is a light-driven water:plastoquinone oxidoreductase that uses light energy to abstract electrons from H(2)O, generating O(2) and a proton gradient subsequently used for ATP formation. It consists of a core antenna complex that captures photons, and an electron transfer chain that converts photonic excitation into a charge separation. The sequence is that of Photosystem II reaction center protein J from Prochlorococcus marinus (strain MIT 9303).